Here is a 455-residue protein sequence, read N- to C-terminus: Regulatory protein LuxO (455 aa).

A Response regulatory domain is found at Met-1 to Ile-112. 4-aspartylphosphate is present on Asp-47. The Sigma-54 factor interaction domain maps to Phe-132–Val-361. Residues Gly-160–Glu-167 and Ala-223–Glu-232 contribute to the ATP site.

Involved in the regulation of different processes depending on the cell density. Acts together with sigma-54 to repress, perhaps indirectly, some genes. This Vibrio cholerae serotype O1 (strain ATCC 39315 / El Tor Inaba N16961) protein is Regulatory protein LuxO (luxO).